Here is a 257-residue protein sequence, read N- to C-terminus: Cobalt transport protein CbiM (257 aa).

The N-terminal stretch at 1–33 is a signal peptide; sequence MVKPTQAKRYASLGAIALLTTSLVVASPNPALA. 6 helical membrane-spanning segments follow: residues 39 to 59, 74 to 94, 117 to 137, 138 to 158, 171 to 191, and 214 to 234; these read GFLP…FLAW, SVLL…LKIP, LMAV…AHGG, LTTL…LAWL, AIAL…LTSL, and LFAV…VLVW.

Belongs to the CbiM family. Forms an energy-coupling factor (ECF) transporter complex composed of an ATP-binding protein (A component, CbiO), a transmembrane protein (T component, CbiQ) and 2 possible substrate-capture proteins (S components, CbiM and CbiN) of unknown stoichimetry.

The protein resides in the cell inner membrane. Its pathway is cofactor biosynthesis; adenosylcobalamin biosynthesis. Part of the energy-coupling factor (ECF) transporter complex CbiMNOQ involved in cobalt import. The polypeptide is Cobalt transport protein CbiM (Thermosynechococcus vestitus (strain NIES-2133 / IAM M-273 / BP-1)).